We begin with the raw amino-acid sequence, 353 residues long: Rhodopsin (353 aa).

The Extracellular segment spans residues 1 to 36 (MNGTEGPFFYVPMVNTTGIVRSPYEYPQYYLVNPAA). Residues N2 and N15 are each glycosylated (N-linked (GlcNAc...) asparagine). Residues 37–61 (YAALGAYMFLLILVGFPINFLTLYV) form a helical membrane-spanning segment. Topologically, residues 62–73 (TIEHKKLRTPLN) are cytoplasmic. The chain crosses the membrane as a helical span at residues 74 to 96 (YILLNLAVADLFMVLGGFTTTMY). Over 97 to 110 (TSMHGYFVLGRLGC) the chain is Extracellular. The cysteines at positions 110 and 187 are disulfide-linked. A helical membrane pass occupies residues 111-133 (NIEGFFATLGGEIALWSLVVLAI). The 'Ionic lock' involved in activated form stabilization motif lies at 134-136 (ERW). The Cytoplasmic segment spans residues 134 to 152 (ERWVVVCKPISNFRFGENH). A helical transmembrane segment spans residues 153–173 (AIMGLAFTWTMAMACAAPPLV). At 174–202 (GWSRYIPEGMQCSCGIDYYTRAEGFNNES) the chain is on the extracellular side. The N-linked (GlcNAc...) asparagine glycan is linked to N200. The helical transmembrane segment at 203–224 (FVIYMFICHFTIPLTVVFFCYG) threads the bilayer. Topologically, residues 225-252 (RLLCAVKEAAAAQQESETTQRAEKEVTR) are cytoplasmic. A helical membrane pass occupies residues 253–274 (MVIMMVIAFLVCWLPYASVAWY). Residues 275–286 (IFTHQGSEFGPV) are Extracellular-facing. A helical membrane pass occupies residues 287–308 (FMTIPAFFAKSSSIYNPMIYIC). K296 is modified (N6-(retinylidene)lysine). Topologically, residues 309-353 (LNKQFRHCMITTLCCGKNPFEEEEGASTASKTEASSVSSSSVSPA) are cytoplasmic. Residues C322 and C323 are each lipidated (S-palmitoyl cysteine). The segment at 331 to 353 (EEGASTASKTEASSVSSSSVSPA) is disordered. Low complexity predominate over residues 334–353 (ASTASKTEASSVSSSSVSPA).

The protein belongs to the G-protein coupled receptor 1 family. Opsin subfamily. In terms of processing, phosphorylated on some or all of the serine and threonine residues present in the C-terminal region. Post-translationally, contains one covalently linked retinal chromophore.

It is found in the membrane. It localises to the cell projection. The protein resides in the cilium. Its subcellular location is the photoreceptor outer segment. Photoreceptor required for image-forming vision at low light intensity. While most salt water fish species use retinal as chromophore, most freshwater fish use 3-dehydroretinal, or a mixture of retinal and 3-dehydroretinal. Light-induced isomerization of 11-cis to all-trans retinal triggers a conformational change that activates signaling via G-proteins. Subsequent receptor phosphorylation mediates displacement of the bound G-protein alpha subunit by arrestin and terminates signaling. In Diplodus annularis (Annular seabream), this protein is Rhodopsin (rho).